The primary structure comprises 2698 residues: Zinc finger protein 292 (2698 aa).

The C2H2-type 1 zinc-finger motif lies at 567–589 (YSCPICAKNFNSKDSFVPHVTLH). At S654 the chain carries Phosphoserine. 6 C2H2-type zinc fingers span residues 681–705 (FNCPVTFCKKGFKYFKNLIAHVKGH), 722–744 (VICQYCRRHFVSVTHLNDHLQMH), 750–774 (YICIQMKCKAGFNSYAELLAHRKEH), 779–803 (AKCLFPKCGRIFSQAYLLYDHEAQH), 807–831 (YTCKFTGCGKVYRSQSEMEKHQDGH), and 1085–1110 (FSCQVEGCTRTYNSSQSIGKHMKTAH). The segment covering 822 to 834 (SEMEKHQDGHSHP) has biased composition (basic and acidic residues). Positions 822 to 894 (SEMEKHQDGH…AEPAVTKHGQ (73 aa)) are disordered. N6-acetyllysine is present on K1104. A Phosphoserine modification is found at S1146. Polar residues predominate over residues 1278-1325 (NSTNHYPSQTDGNINSSFLKGGSSENGVFPSQVSSADDFSSTSAQPST). The tract at residues 1278–1349 (NSTNHYPSQT…KERKPKHNKR (72 aa)) is disordered. A C2H2-type 8; degenerate zinc finger spans residues 1361-1383 (FICSRCYRAFTNPRSLGGHLSKR). Polar residues-rich tracts occupy residues 1574 to 1603 (FSSSTEPPQNFTNNSAHVSVISGPQNTRSS) and 1624 to 1633 (SVSNTSQNVL). Positions 1574–1656 (FSSSTEPPQN…PVPDTNTRSD (83 aa)) are disordered. 2 C2H2-type zinc fingers span residues 1879-1904 (FVCQNQGCNYSAMTKDALFKHYGKIH) and 1924-1949 (FKCVVPSCTKTFTRNSNLRAHCQLVH). The segment at 1964–1997 (PYGRKSQSENLSSPQNNQVKKQPSMAEETKTESQ) is disordered. Over residues 1971-1984 (SENLSSPQNNQVKK) the composition is skewed to polar residues. An N6-acetyllysine modification is found at K2020. Basic and acidic residues predominate over residues 2021–2032 (QLAEKKSPEKPE). The interval 2021–2075 (QLAEKKSPEKPESSSQPVTSSAEQYNANLANLKTKGRKNKRHRKEKEEKREKNPV) is disordered. Polar residues predominate over residues 2038–2051 (VTSSAEQYNANLAN). The span at 2054–2064 (TKGRKNKRHRK) shows a compositional bias: basic residues. 4 consecutive C2H2-type zinc fingers follow at residues 2091-2116 (YCCVHQGCFAAFTIQQNLILHYQAVH), 2149-2174 (FRCQVSDCSRIFQAITGLIQHYMKLH), 2193-2218 (FPCDQLECKLSFTTYLSYVVHLEVDH), and 2233-2258 (YKCDCEGCDRIYATRSNLLRHIFNKH). Over residues 2262–2271 (HKAHLIRPRK) the composition is skewed to basic residues. The disordered stretch occupies residues 2262 to 2323 (HKAHLIRPRK…KSNLENKSAK (62 aa)). The C2H2-type 15 zinc-finger motif lies at 2362–2386 (YPCMIKGCTSVVTSESNIIRHYKCH). Disordered regions lie at residues 2411 to 2454 (GKEI…GEKD), 2467 to 2553 (LINE…EEHP), and 2580 to 2608 (KQKKNSDRDHSNSGSKRGSHSSSRRHVDK). Residues 2421 to 2437 (KNDKKDPDSSVLEKNDN) are compositionally biased toward basic and acidic residues. Residues 2470–2488 (EDSTNAENQGNTTLKGNNE) show a composition bias toward polar residues. Basic and acidic residues-rich tracts occupy residues 2489–2501 (FQEHDSCTSERQK) and 2580–2590 (KQKKNSDRDHS). Basic residues predominate over residues 2596-2606 (RGSHSSSRRHV).

This sequence belongs to the krueppel C2H2-type zinc-finger protein family. In terms of tissue distribution, expressed in postnatal day 1 (P1) pituitary. Also detected in presomatotrophic cell line GHFT1-5.

The protein localises to the nucleus. Its function is as follows. May be involved in transcriptional regulation. The polypeptide is Zinc finger protein 292 (Mus musculus (Mouse)).